The following is a 227-amino-acid chain: Uracil-DNA glycosylase (227 aa).

Residue Asp-68 is the Proton acceptor of the active site.

The protein belongs to the uracil-DNA glycosylase (UDG) superfamily. UNG family.

It is found in the cytoplasm. The enzyme catalyses Hydrolyzes single-stranded DNA or mismatched double-stranded DNA and polynucleotides, releasing free uracil.. Its function is as follows. Excises uracil residues from the DNA which can arise as a result of misincorporation of dUMP residues by DNA polymerase or due to deamination of cytosine. In Mycobacterium sp. (strain JLS), this protein is Uracil-DNA glycosylase.